A 175-amino-acid polypeptide reads, in one-letter code: CASP-like protein 2C1 (175 aa).

The Cytoplasmic segment spans residues 1 to 7 (MVRLRET). Residues 8–28 (EVILRLCIVFFILLSSCLIGL) traverse the membrane as a helical segment. Topologically, residues 29–51 (DSQTKEIAYIHKKVSFRYLLALE) are extracellular. A helical membrane pass occupies residues 52–72 (AELYINVVVAAYNLVQIGLGW). Over 73-91 (YNVEQKTSNPKWFSYLLDQ) the chain is Cytoplasmic. A helical membrane pass occupies residues 92-112 (TAAYVVFAGTSAAAQHSLLVV). Residues 113–136 (TGSRELQWMKWCYKFTRFCFQMGS) are Extracellular-facing. Residues 137–157 (AIILNYIAAALMVLLSSISAF) traverse the membrane as a helical segment. At 158-175 (NLFRLYSPKRFFSFKSSS) the chain is on the cytoplasmic side.

It belongs to the Casparian strip membrane proteins (CASP) family. In terms of assembly, homodimer and heterodimers.

The protein localises to the cell membrane. This chain is CASP-like protein 2C1, found in Arabidopsis lyrata subsp. lyrata (Lyre-leaved rock-cress).